The primary structure comprises 471 residues: Amidophosphoribosyltransferase (471 aa).

The Nucleophile role is filled by C2. One can recognise a Glutamine amidotransferase type-2 domain in the interval 2–224; that stretch reads CGIFGIYSYE…PGEIIEIKDG (223 aa). C255 provides a ligand contact to [4Fe-4S] cluster. S302, D364, and D365 together coordinate Mg(2+). C401, C450, and C453 together coordinate [4Fe-4S] cluster.

The protein in the C-terminal section; belongs to the purine/pyrimidine phosphoribosyltransferase family. It depends on Mg(2+) as a cofactor. Requires [4Fe-4S] cluster as cofactor.

The enzyme catalyses 5-phospho-beta-D-ribosylamine + L-glutamate + diphosphate = 5-phospho-alpha-D-ribose 1-diphosphate + L-glutamine + H2O. Its pathway is purine metabolism; IMP biosynthesis via de novo pathway; N(1)-(5-phospho-D-ribosyl)glycinamide from 5-phospho-alpha-D-ribose 1-diphosphate: step 1/2. In terms of biological role, catalyzes the formation of phosphoribosylamine from phosphoribosylpyrophosphate (PRPP) and glutamine. In Methanocaldococcus jannaschii (strain ATCC 43067 / DSM 2661 / JAL-1 / JCM 10045 / NBRC 100440) (Methanococcus jannaschii), this protein is Amidophosphoribosyltransferase.